Here is a 317-residue protein sequence, read N- to C-terminus: MPLRVIFMGTPEFSVPTLRAIAKAGHEISAVYTQPPRAAGRRGLELTPSPVQREAERLGIEVRTPTSLKGEAEQAAFNALRADIAVVVAYGLLLPKVILDAPRLGCINGHASLLPRWRGAAPIQRAIMAGDLESGMMVMRMEEGLDTGPVGLLEKCAIDPDMTAGDLHDRLMRVGAALMVEALARLAKNTLTFTAQAAEGVTYARKIDKSETRVDWTRPAAEVHNHLRGLSPFPGAWSEIDIGGRMERLKLLRSTLSDGLSPSEDLGESGGILDDRLTVACGAGAIRLVEVQRAGGKPAAASEFLRGAKIVKGMKFS.

112–115 contacts (6S)-5,6,7,8-tetrahydrofolate; it reads SLLP.

It belongs to the Fmt family.

It carries out the reaction L-methionyl-tRNA(fMet) + (6R)-10-formyltetrahydrofolate = N-formyl-L-methionyl-tRNA(fMet) + (6S)-5,6,7,8-tetrahydrofolate + H(+). Its function is as follows. Attaches a formyl group to the free amino group of methionyl-tRNA(fMet). The formyl group appears to play a dual role in the initiator identity of N-formylmethionyl-tRNA by promoting its recognition by IF2 and preventing the misappropriation of this tRNA by the elongation apparatus. The protein is Methionyl-tRNA formyltransferase of Mesorhizobium japonicum (strain LMG 29417 / CECT 9101 / MAFF 303099) (Mesorhizobium loti (strain MAFF 303099)).